Here is a 471-residue protein sequence, read N- to C-terminus: Ribulose bisphosphate carboxylase large chain (471 aa).

Substrate-binding residues include N115 and T165. K167 functions as the Proton acceptor in the catalytic mechanism. K169 is a binding site for substrate. Mg(2+) is bound by residues K193, D195, and E196. N6-carboxylysine is present on K193. H286 functions as the Proton acceptor in the catalytic mechanism. R287, H319, and S371 together coordinate substrate.

It belongs to the RuBisCO large chain family. Type I subfamily. As to quaternary structure, heterohexadecamer of 8 large chains and 8 small chains. Forms a CsoS2-CsoS1-RuBisCO complex. It depends on Mg(2+) as a cofactor.

The protein resides in the carboxysome. The enzyme catalyses 2 (2R)-3-phosphoglycerate + 2 H(+) = D-ribulose 1,5-bisphosphate + CO2 + H2O. It carries out the reaction D-ribulose 1,5-bisphosphate + O2 = 2-phosphoglycolate + (2R)-3-phosphoglycerate + 2 H(+). Its function is as follows. RuBisCO catalyzes two reactions: the carboxylation of D-ribulose 1,5-bisphosphate, the primary event in carbon dioxide fixation, as well as the oxidative fragmentation of the pentose substrate in the photorespiration process. Both reactions occur simultaneously and in competition at the same active site. This is Ribulose bisphosphate carboxylase large chain from Parasynechococcus marenigrum (strain WH8102).